The sequence spans 339 residues: MNKTAEELVESLRCASEGLTNALTSITVKVSFVFLATVILLSYYFAVLAIRALWNNNIFSNSTRLILIVCLLNSVVHQSTMMEIRIRQVYRSFVYSSEPCRLPFHFTDCEVELYFYYLTNYFSTYSVFSLTFDRLISYFFPKCYISYPYQVSISLLIIQLVFTLGTYYFGLYGVPKLGYVPICNYAPRLATNFVKINDFRTTIMVFCIIVTIFIYYLNVKSEKQIKRTSYSLGEQYLARENVATSQSVCILIVLQFVCISVSSFGVNYIKSIKSTLSDEEYNKIAPFVVGVTYANLCLPLVIYFKTKLTIRKRRIRIGVMTSVYGDVGEHINRLKKSWE.

Helical transmembrane passes span 30–50, 113–132, 151–171, 199–219, 249–269, and 284–304; these read VSFV…VLAI, LYFY…SLTF, VSIS…YFGL, FRTT…YLNV, CILI…VNYI, and IAPF…VIYF.

It belongs to the nematode receptor-like protein sra family.

The protein localises to the membrane. The sequence is that of Serpentine receptor class alpha-20 (sra-20) from Caenorhabditis elegans.